The following is a 210-amino-acid chain: MKDPIDLYMNTLVPMVVEQTSRGERAYDIYSRMLKERIIFLSGPVHDGMSSLICAQLLFLEAENPSKEIAMYINSPGGVVTSGLSIYDTMQYIRPKVSTLVIGQAASMGSLLLTAGEKGMRFSLPNSRVMVHQPSGGYQGQATDIMIHARETEKLKRRLNEIYVRHTGQDLETVEAALERDNFMSAEDAKAWGLIDEILESRNRPDDTAK.

Ser107 serves as the catalytic Nucleophile. His132 is an active-site residue.

Belongs to the peptidase S14 family. In terms of assembly, fourteen ClpP subunits assemble into 2 heptameric rings which stack back to back to give a disk-like structure with a central cavity, resembling the structure of eukaryotic proteasomes.

The protein localises to the cytoplasm. The catalysed reaction is Hydrolysis of proteins to small peptides in the presence of ATP and magnesium. alpha-casein is the usual test substrate. In the absence of ATP, only oligopeptides shorter than five residues are hydrolyzed (such as succinyl-Leu-Tyr-|-NHMec, and Leu-Tyr-Leu-|-Tyr-Trp, in which cleavage of the -Tyr-|-Leu- and -Tyr-|-Trp bonds also occurs).. Its function is as follows. Cleaves peptides in various proteins in a process that requires ATP hydrolysis. Has a chymotrypsin-like activity. Plays a major role in the degradation of misfolded proteins. The sequence is that of ATP-dependent Clp protease proteolytic subunit from Cereibacter sphaeroides (strain ATCC 17029 / ATH 2.4.9) (Rhodobacter sphaeroides).